The following is a 209-amino-acid chain: Tektin bundle-interacting protein 1 (209 aa).

In terms of assembly, microtubule inner protein component of sperm flagellar doublet microtubules.

Its subcellular location is the cytoplasm. The protein resides in the cytoskeleton. It localises to the cilium axoneme. The protein localises to the flagellum axoneme. Functionally, microtubule inner protein (MIP) part of the dynein-decorated doublet microtubules (DMTs) in cilia axoneme, which is required for motile cilia beating. Located at the center of the tektin bundle where may function to recruit tektins or stabilize the bundle. This is Tektin bundle-interacting protein 1 from Homo sapiens (Human).